The primary structure comprises 490 residues: AP-5 complex subunit mu-1 (490 aa).

In terms of domain architecture, MHD spans 206–476 (KPQVSISITE…LISSDYYIWN (271 aa)).

The protein belongs to the adaptor complexes medium subunit family. In terms of assembly, probably part of the adaptor protein complex 5 (AP-5) a tetramer composed of AP5B1, AP5M1, AP5S1 and AP5Z1.

It localises to the cytoplasm. The protein resides in the cytosol. The protein localises to the late endosome membrane. Its subcellular location is the lysosome membrane. Functionally, as part of AP-5, a probable fifth adaptor protein complex it may be involved in endosomal transport. The protein is AP-5 complex subunit mu-1 (AP5M1) of Bos taurus (Bovine).